The following is a 441-amino-acid chain: 5-methylthioadenosine/S-adenosylhomocysteine deaminase (441 aa).

The Zn(2+) site is built by His-70 and His-72. 2 residues coordinate substrate: Glu-99 and His-191. Residue His-218 participates in Zn(2+) binding. Substrate is bound by residues Glu-221 and Asp-306. Asp-306 serves as a coordination point for Zn(2+).

It belongs to the metallo-dependent hydrolases superfamily. MTA/SAH deaminase family. Requires Zn(2+) as cofactor.

The enzyme catalyses S-adenosyl-L-homocysteine + H2O + H(+) = S-inosyl-L-homocysteine + NH4(+). It carries out the reaction S-methyl-5'-thioadenosine + H2O + H(+) = S-methyl-5'-thioinosine + NH4(+). Catalyzes the deamination of 5-methylthioadenosine and S-adenosyl-L-homocysteine into 5-methylthioinosine and S-inosyl-L-homocysteine, respectively. Is also able to deaminate adenosine. This Lawsonia intracellularis (strain PHE/MN1-00) protein is 5-methylthioadenosine/S-adenosylhomocysteine deaminase.